Here is a 60-residue protein sequence, read N- to C-terminus: uncharacterized protein (60 aa).

This is an uncharacterized protein from Methanocaldococcus jannaschii (strain ATCC 43067 / DSM 2661 / JAL-1 / JCM 10045 / NBRC 100440) (Methanococcus jannaschii).